The sequence spans 625 residues: MKREYQEAGGSSGGGSSADMGSCKDKVMAGAAGEEEDVDELLAALGYKVRSSDMADVAQKLEQLEMAMGMGGVSAPGAADDGFVSHLATDTVHYNPSDLSSWVESMLSELNAPLPPIPPAPPAARHASTSSTVTGGGGSGFFELPAAADSSSSTYALRPISLPVVATADPSAADSARDTKRMRTGGGSTSSSSSSSSSLGGGASRGSVVEAAPPATQGAAAANAPAVPVVVVDTQEAGIRLVHALLACAEAVQQENFAAAEALVKQIPTLAASQGGAMRKVAAYFGEALARRVYRFRPADSTLLDAAFADLLHAHFYESCPYLKFAHFTANQAILEAFAGCHRVHVVDFGIKQGMQWPALLQALALRPGGPPSFRLTGVGPPQPDETDALQQVGWKLAQFAHTIRVDFQYRGLVAATLADLEPFMLQPEGEADANEEPEVIAVNSVFELHRLLAQPGALEKVLGTVHAVRPRIVTVVEQEANHNSGSFLDRFTESLHYYSTMFDSLEGGSSGQAELSPPAAGGGGGTDQVMSEVYLGRQICNVVACEGAERTERHETLGQWRNRLGRAGFEPVHLGSNAYKQASTLLALFAGGDGYRVEEKEGCLTLGWHTRPLIATSAWRVAAA.

The tract at residues 1–34 (MKREYQEAGGSSGGGSSADMGSCKDKVMAGAAGE) is disordered. A DELLA motif motif is present at residues 39–43 (DELLA). The tract at residues 167 to 209 (TADPSAADSARDTKRMRTGGGSTSSSSSSSSSLGGGASRGSVV) is disordered. Low complexity predominate over residues 189–198 (TSSSSSSSSS). In terms of domain architecture, GRAS spans 232-621 (VDTQEAGIRL…RPLIATSAWR (390 aa)). The segment at 239 to 294 (IRLVHALLACAEAVQQENFAAAEALVKQIPTLAASQGGAMRKVAAYFGEALARRVY) is leucine repeat I (LRI). The interval 241 to 278 (LVHALLACAEAVQQENFAAAEALVKQIPTLAASQGGAM) is required for possible homodimerization. Residues 246–250 (LACAE) carry the LxCxE motif motif. The VHIID stretch occupies residues 313-378 (HAHFYESCPY…GGPPSFRLTG (66 aa)). A VHIID motif is present at residues 344 to 348 (VHVVD). The tract at residues 392–431 (QVGWKLAQFAHTIRVDFQYRGLVAATLADLEPFMLQPEGE) is leucine repeat II (LRII). The tract at residues 441–542 (IAVNSVFELH…EVYLGRQICN (102 aa)) is PFYRE. Residues 449-453 (LHRLL) carry the LXXLL motif motif. Residues 545 to 621 (ACEGAERTER…RPLIATSAWR (77 aa)) form an SAW region.

It belongs to the GRAS family. DELLA subfamily. In terms of assembly, may be a homodimer. Interacts directly with the GID2 component of the SCF(GID2) complex. Interacts with GID1 in a GA-dependent manner, probably leading to its interaction with GID2 and its subsequent degradation. Interacts with D14 and GID1 in an strigolactone-dependent manner. Interacts with HD16/EL1. In terms of processing, phosphorylated on Ser/Thr residues in the N-terminal part. Both phosphorylated and unphosphorylated forms are degraded upon GA treatment, suggesting that phosphorylation does not trigger ubiquitination. Phosphorylated by HD16/EL1. Phosphorylation enhances its stability. Post-translationally, ubiquitinated. Upon GA application it is ubiquitinated by the SCF(GID2) complex, leading to its subsequent degradation. As to expression, expressed in nodes, internodes, leaf sheats of young seedlings and ears of adult plants. Weakly expressed in leaf blade and root.

It is found in the nucleus. Its function is as follows. Probable transcriptional regulator that acts as a repressor of the gibberellin (GA) signaling pathway. Probably acts by participating in large multiprotein complexes that repress transcription of GA-inducible genes. Upon GA application, it is degraded by the proteasome, allowing the GA signaling pathway. In contrast, its overexpression prevents the GA signaling pathway and induces a dwarf phenotype. The chain is DELLA protein SLR1 from Oryza sativa subsp. japonica (Rice).